Consider the following 47-residue polypeptide: Delta-actitoxin-Ael1a (47 aa).

Intrachain disulfides connect Cys4-Cys44, Cys6-Cys34, and Cys27-Cys45.

Belongs to the sea anemone sodium channel inhibitory toxin family. Type I subfamily. In terms of tissue distribution, expressed in ectodermal glands. Not expressed in nematocytes.

Its subcellular location is the secreted. Binds specifically to voltage-gated sodium channels (Nav), thereby delaying their inactivation during signal transduction. It strongly stimulates mammalian cardiac muscle contraction. Paralyzes the shore crab (C.maenas) by tetanic contractions after intramuscular injection. The polypeptide is Delta-actitoxin-Ael1a (Anthopleura elegantissima (Green aggregating anemone)).